The primary structure comprises 715 residues: Methionine--tRNA ligase (715 aa).

The 'HIGH' region motif lies at 17–27 (PYANGPIHLGH). The Zn(2+) site is built by Cys-148, Cys-151, Cys-161, and Cys-164. The 'KMSKS' region signature appears at 359-363 (KMSKS). An ATP-binding site is contributed by Lys-362. In terms of domain architecture, tRNA-binding spans 614 to 715 (DLSKVELRVG…KDAKPGDRLK (102 aa)).

It belongs to the class-I aminoacyl-tRNA synthetase family. MetG type 1 subfamily. Homodimer. It depends on Zn(2+) as a cofactor.

Its subcellular location is the cytoplasm. The catalysed reaction is tRNA(Met) + L-methionine + ATP = L-methionyl-tRNA(Met) + AMP + diphosphate. Functionally, is required not only for elongation of protein synthesis but also for the initiation of all mRNA translation through initiator tRNA(fMet) aminoacylation. The polypeptide is Methionine--tRNA ligase (Leptospira interrogans serogroup Icterohaemorrhagiae serovar copenhageni (strain Fiocruz L1-130)).